The following is a 220-amino-acid chain: Putative threonylcarbamoyl-AMP synthase (220 aa).

The region spanning 17 to 202 (ARGIASAVAA…TPRILRAGPV (186 aa)) is the YrdC-like domain.

Belongs to the SUA5 family.

The protein localises to the cytoplasm. The catalysed reaction is L-threonine + hydrogencarbonate + ATP = L-threonylcarbamoyladenylate + diphosphate + H2O. Required for the formation of a threonylcarbamoyl group on adenosine at position 37 (t(6)A37) in tRNAs that read codons beginning with adenine. Catalyzes the conversion of L-threonine, HCO(3)(-)/CO(2) and ATP to give threonylcarbamoyl-AMP (TC-AMP) as the acyladenylate intermediate, with the release of diphosphate. In Mycobacterium leprae (strain TN), this protein is Putative threonylcarbamoyl-AMP synthase.